The sequence spans 60 residues: Large ribosomal subunit protein bL33 (60 aa).

The protein belongs to the bacterial ribosomal protein bL33 family.

This Flavobacterium psychrophilum (strain ATCC 49511 / DSM 21280 / CIP 103535 / JIP02/86) protein is Large ribosomal subunit protein bL33.